Reading from the N-terminus, the 21-residue chain is Cytoplasmic filament protein A (21 aa).

The interval 1-21 (AILELPQSPNVFHPEKPSAVG) is disordered.

The protein localises to the cytoplasm. In terms of biological role, component of the cytoplasmic filaments that run the length of the organism just underneath the cytoplasmic membrane. The protein is Cytoplasmic filament protein A (cfpA) of Treponema phagedenis.